A 196-amino-acid polypeptide reads, in one-letter code: uncharacterized protein (196 aa).

Over residues 1-10 (MPGMVPPHVP) the composition is skewed to pro residues. Disordered stretches follow at residues 1–118 (MPGM…EGSG) and 176–196 (TEQAAPPVCPAPASRRLSAPG). Residues 25-45 (PVAPQVPSPGGAPGQGPYPYS) show a composition bias toward low complexity. The segment covering 54–69 (LDTSGKNLTEQNSYSN) has biased composition (polar residues).

This is an uncharacterized protein from Homo sapiens (Human).